The chain runs to 475 residues: Putative response regulator NtrX-like (475 aa).

The 117-residue stretch at 5–121 (DVLILDDEES…KLIILLKRAC (117 aa)) folds into the Response regulatory domain. Asp54 bears the 4-aspartylphosphate mark. Residues 143-369 (LVGGCSVTLK…LRNVVEWTLI (227 aa)) enclose the Sigma-54 factor interaction domain. Residues 171 to 178 (GKVGSGKE) and 232 to 241 (ANNGTLYIDE) contribute to the ATP site.

Functionally, member of the two-component regulatory system RT0550/RT0603. This Rickettsia typhi (strain ATCC VR-144 / Wilmington) protein is Putative response regulator NtrX-like.